Here is a 127-residue protein sequence, read N- to C-terminus: Small ribosomal subunit protein uS11 (127 aa).

Belongs to the universal ribosomal protein uS11 family. Part of the 30S ribosomal subunit. Interacts with proteins S7 and S18. Binds to IF-3.

Functionally, located on the platform of the 30S subunit, it bridges several disparate RNA helices of the 16S rRNA. Forms part of the Shine-Dalgarno cleft in the 70S ribosome. The chain is Small ribosomal subunit protein uS11 from Streptococcus pyogenes serotype M49 (strain NZ131).